A 409-amino-acid chain; its full sequence is Gamma-glutamyl phosphate reductase (409 aa).

The protein belongs to the gamma-glutamyl phosphate reductase family.

It is found in the cytoplasm. It catalyses the reaction L-glutamate 5-semialdehyde + phosphate + NADP(+) = L-glutamyl 5-phosphate + NADPH + H(+). The protein operates within amino-acid biosynthesis; L-proline biosynthesis; L-glutamate 5-semialdehyde from L-glutamate: step 2/2. Its function is as follows. Catalyzes the NADPH-dependent reduction of L-glutamate 5-phosphate into L-glutamate 5-semialdehyde and phosphate. The product spontaneously undergoes cyclization to form 1-pyrroline-5-carboxylate. The polypeptide is Gamma-glutamyl phosphate reductase (Koribacter versatilis (strain Ellin345)).